Consider the following 94-residue polypeptide: Integration host factor subunit beta (94 aa).

This sequence belongs to the bacterial histone-like protein family. Heterodimer of an alpha and a beta chain.

Functionally, this protein is one of the two subunits of integration host factor, a specific DNA-binding protein that functions in genetic recombination as well as in transcriptional and translational control. This Azoarcus sp. (strain BH72) protein is Integration host factor subunit beta.